A 206-amino-acid chain; its full sequence is MARSKSSAGWLKEHFDDYYVNKAKQDGWRSRAIYKLQEIDEKDQLFSKGMTVIDLGAAPGGWSQWTTHQTGDEGRVFALDILPVEPFAGVTFIQGDFQEDDVYQSLLDALDGREVDLVMSDMAPNMTGNKGVDIPRAMYLVELCVDLADQVLKPNGDLLMKVFQGEGYDQLLKSLREKYQKVLTRKPKASRPRSKEIYLLARGKKA.

Residues glycine 60, tryptophan 62, aspartate 80, aspartate 96, and aspartate 121 each coordinate S-adenosyl-L-methionine. The active-site Proton acceptor is the lysine 161.

Belongs to the class I-like SAM-binding methyltransferase superfamily. RNA methyltransferase RlmE family.

Its subcellular location is the cytoplasm. It catalyses the reaction uridine(2552) in 23S rRNA + S-adenosyl-L-methionine = 2'-O-methyluridine(2552) in 23S rRNA + S-adenosyl-L-homocysteine + H(+). Its function is as follows. Specifically methylates the uridine in position 2552 of 23S rRNA at the 2'-O position of the ribose in the fully assembled 50S ribosomal subunit. This chain is Ribosomal RNA large subunit methyltransferase E, found in Hydrogenovibrio crunogenus (strain DSM 25203 / XCL-2) (Thiomicrospira crunogena).